We begin with the raw amino-acid sequence, 165 residues long: Protein FAM219A (165 aa).

The residue at position 1 (methionine 1) is an N-acetylmethionine. The interval 1 to 114 (MMEEIDRFQV…SRYSSSGYSS (114 aa)) is disordered. Residues 32-44 (CDAREEKQRELAR) show a composition bias toward basic and acidic residues. Over residues 49–63 (KNGSMGSPVNQQPKK) the composition is skewed to polar residues. A phosphoserine mark is found at serine 55 and serine 85. Position 96 is a phosphothreonine (threonine 96). A phosphoserine mark is found at serine 98 and serine 105. Over residues 105–114 (SRYSSSGYSS) the composition is skewed to low complexity.

This sequence belongs to the FAM219 family.

The protein is Protein FAM219A (FAM219A) of Macaca fascicularis (Crab-eating macaque).